Consider the following 324-residue polypeptide: Probable uridine nucleosidase 1 (324 aa).

Residue His-248 is part of the active site.

The protein belongs to the IUNH family.

It is found in the cytoplasm. The catalysed reaction is uridine + H2O = D-ribose + uracil. Involved in pyrimidine breakdown. This is Probable uridine nucleosidase 1 (URH1) from Oryza sativa subsp. japonica (Rice).